The chain runs to 115 residues: Large ribosomal subunit protein uL23 (115 aa).

The protein belongs to the universal ribosomal protein uL23 family. Part of the 50S ribosomal subunit. Contacts protein L29, and trigger factor when it is bound to the ribosome.

In terms of biological role, one of the early assembly proteins it binds 23S rRNA. One of the proteins that surrounds the polypeptide exit tunnel on the outside of the ribosome. Forms the main docking site for trigger factor binding to the ribosome. This is Large ribosomal subunit protein uL23 from Granulibacter bethesdensis (strain ATCC BAA-1260 / CGDNIH1).